Here is a 173-residue protein sequence, read N- to C-terminus: Probable chemoreceptor glutamine deamidase CheD (173 aa).

Belongs to the CheD family.

It catalyses the reaction L-glutaminyl-[protein] + H2O = L-glutamyl-[protein] + NH4(+). In terms of biological role, probably deamidates glutamine residues to glutamate on methyl-accepting chemotaxis receptors (MCPs), playing an important role in chemotaxis. The chain is Probable chemoreceptor glutamine deamidase CheD from Haloarcula marismortui (strain ATCC 43049 / DSM 3752 / JCM 8966 / VKM B-1809) (Halobacterium marismortui).